A 319-amino-acid polypeptide reads, in one-letter code: Dehydrogenase/reductase SDR family member 9 (319 aa).

The first 20 residues, 1-20 (MLLWVLALLFLCAFLWNYKG), serve as a signal peptide directing secretion. NAD(+) contacts are provided by residues 34 to 58 (ITGCDSGFGNLAARTFDRKGFRVIA) and D83. S164 is a substrate binding site. Y176 acts as the Proton acceptor in catalysis. NAD(+) is bound at residue K180.

It belongs to the short-chain dehydrogenases/reductases (SDR) family. Homotetramer. As to expression, highly expressed in epithelium of estrus uterus.

The protein resides in the microsome membrane. The protein localises to the endoplasmic reticulum membrane. The catalysed reaction is 3beta-hydroxy-5alpha-pregnane-20-one + NAD(+) = 5alpha-pregnane-3,20-dione + NADH + H(+). It catalyses the reaction 17beta-hydroxy-5alpha-androstan-3-one + NAD(+) = 5alpha-androstan-3,17-dione + NADH + H(+). The enzyme catalyses androsterone + NAD(+) = 5alpha-androstan-3,17-dione + NADH + H(+). It carries out the reaction 5alpha-androstane-3alpha,17beta-diol + NAD(+) = 17beta-hydroxy-5alpha-androstan-3-one + NADH + H(+). The catalysed reaction is all-trans-retinol + NAD(+) = all-trans-retinal + NADH + H(+). It catalyses the reaction 3alpha-hydroxy-5alpha-pregnan-20-one + NAD(+) = 5alpha-pregnane-3,20-dione + NADH + H(+). Functionally, 3-alpha-hydroxysteroid dehydrogenase that converts 3-alpha-tetrahydroprogesterone (allopregnanolone) to dihydroxyprogesterone and 3-alpha-androstanediol to dihydroxyprogesterone. Plays also role in the biosynthesis of retinoic acid from retinaldehyde. Can utilize both NADH and NADPH. The chain is Dehydrogenase/reductase SDR family member 9 (Dhrs9) from Rattus norvegicus (Rat).